The primary structure comprises 24 residues: 33.0 kDa cold shock protein (24 aa).

This sequence belongs to the thaumatin family. Homooligomer; disulfide-linked. In terms of processing, glycosylated.

The protein resides in the secreted. It localises to the extracellular space. It is found in the apoplast. This chain is 33.0 kDa cold shock protein, found in Arachis hypogaea (Peanut).